The primary structure comprises 291 residues: Ribose-phosphate pyrophosphokinase (291 aa).

Residues 34–36 and 92–93 each bind ATP; these read DGE and RQ. 2 residues coordinate Mg(2+): His-125 and Asp-165. Lys-188 is an active-site residue. Arg-190 and Asp-214 together coordinate D-ribose 5-phosphate.

The protein belongs to the ribose-phosphate pyrophosphokinase family. Class III (archaeal) subfamily. Requires Mg(2+) as cofactor.

The protein localises to the cytoplasm. It catalyses the reaction D-ribose 5-phosphate + ATP = 5-phospho-alpha-D-ribose 1-diphosphate + AMP + H(+). It functions in the pathway metabolic intermediate biosynthesis; 5-phospho-alpha-D-ribose 1-diphosphate biosynthesis; 5-phospho-alpha-D-ribose 1-diphosphate from D-ribose 5-phosphate (route I): step 1/1. Functionally, involved in the biosynthesis of the central metabolite phospho-alpha-D-ribosyl-1-pyrophosphate (PRPP) via the transfer of pyrophosphoryl group from ATP to 1-hydroxyl of ribose-5-phosphate (Rib-5-P). This chain is Ribose-phosphate pyrophosphokinase, found in Methanopyrus kandleri (strain AV19 / DSM 6324 / JCM 9639 / NBRC 100938).